We begin with the raw amino-acid sequence, 250 residues long: DNA repair protein RecO (250 aa).

This sequence belongs to the RecO family.

In terms of biological role, involved in DNA repair and RecF pathway recombination. This chain is DNA repair protein RecO, found in Granulibacter bethesdensis (strain ATCC BAA-1260 / CGDNIH1).